The chain runs to 89 residues: Small ribosomal subunit protein uS15 (89 aa).

The protein belongs to the universal ribosomal protein uS15 family. As to quaternary structure, part of the 30S ribosomal subunit. Forms a bridge to the 50S subunit in the 70S ribosome, contacting the 23S rRNA.

In terms of biological role, one of the primary rRNA binding proteins, it binds directly to 16S rRNA where it helps nucleate assembly of the platform of the 30S subunit by binding and bridging several RNA helices of the 16S rRNA. Its function is as follows. Forms an intersubunit bridge (bridge B4) with the 23S rRNA of the 50S subunit in the ribosome. This Acholeplasma laidlawii (strain PG-8A) protein is Small ribosomal subunit protein uS15.